The sequence spans 288 residues: 4-hydroxy-3-methylbut-2-enyl diphosphate reductase (288 aa).

Cysteine 12 lines the [4Fe-4S] cluster pocket. Positions 42 and 77 each coordinate (2E)-4-hydroxy-3-methylbut-2-enyl diphosphate. Residues histidine 42 and histidine 77 each coordinate dimethylallyl diphosphate. Residues histidine 42 and histidine 77 each contribute to the isopentenyl diphosphate site. A [4Fe-4S] cluster-binding site is contributed by cysteine 99. Histidine 127 lines the (2E)-4-hydroxy-3-methylbut-2-enyl diphosphate pocket. Dimethylallyl diphosphate is bound at residue histidine 127. Residue histidine 127 coordinates isopentenyl diphosphate. The Proton donor role is filled by glutamate 129. Threonine 165 lines the (2E)-4-hydroxy-3-methylbut-2-enyl diphosphate pocket. Cysteine 193 is a binding site for [4Fe-4S] cluster. (2E)-4-hydroxy-3-methylbut-2-enyl diphosphate is bound by residues serine 221, serine 222, asparagine 223, and serine 265. Residues serine 221, serine 222, asparagine 223, and serine 265 each coordinate dimethylallyl diphosphate. Residues serine 221, serine 222, asparagine 223, and serine 265 each coordinate isopentenyl diphosphate.

The protein belongs to the IspH family. It depends on [4Fe-4S] cluster as a cofactor.

It carries out the reaction isopentenyl diphosphate + 2 oxidized [2Fe-2S]-[ferredoxin] + H2O = (2E)-4-hydroxy-3-methylbut-2-enyl diphosphate + 2 reduced [2Fe-2S]-[ferredoxin] + 2 H(+). It catalyses the reaction dimethylallyl diphosphate + 2 oxidized [2Fe-2S]-[ferredoxin] + H2O = (2E)-4-hydroxy-3-methylbut-2-enyl diphosphate + 2 reduced [2Fe-2S]-[ferredoxin] + 2 H(+). The protein operates within isoprenoid biosynthesis; dimethylallyl diphosphate biosynthesis; dimethylallyl diphosphate from (2E)-4-hydroxy-3-methylbutenyl diphosphate: step 1/1. It participates in isoprenoid biosynthesis; isopentenyl diphosphate biosynthesis via DXP pathway; isopentenyl diphosphate from 1-deoxy-D-xylulose 5-phosphate: step 6/6. In terms of biological role, catalyzes the conversion of 1-hydroxy-2-methyl-2-(E)-butenyl 4-diphosphate (HMBPP) into a mixture of isopentenyl diphosphate (IPP) and dimethylallyl diphosphate (DMAPP). Acts in the terminal step of the DOXP/MEP pathway for isoprenoid precursor biosynthesis. This chain is 4-hydroxy-3-methylbut-2-enyl diphosphate reductase, found in Caldanaerobacter subterraneus subsp. tengcongensis (strain DSM 15242 / JCM 11007 / NBRC 100824 / MB4) (Thermoanaerobacter tengcongensis).